A 340-amino-acid chain; its full sequence is Deubiquitinase SseL (340 aa).

His-223 is an active-site residue. Cys-285 functions as the Nucleophile in the catalytic mechanism.

This sequence belongs to the peptidase C79 family.

Its subcellular location is the secreted. It localises to the host cytoplasm. In terms of biological role, effector proteins function to alter host cell physiology and promote bacterial survival in host tissues. This protease targets the host cell ubiquitin pathway by acting as a deubiquitinase in infected host cells. This Salmonella paratyphi A (strain ATCC 9150 / SARB42) protein is Deubiquitinase SseL (sseL).